The chain runs to 326 residues: Photosystem II assembly factor Ycf39 (326 aa).

The protein belongs to the NmrA-type oxidoreductase family. Ycf39 subfamily. Purified in several chlorophyll- and carotenoid-containing complexes, including photosystem II (PSII) assembly intermediate complex RCII* (iD1, D1, D2, PsbE, PsbF, PsbI, Ycf39, Ycf48, HliC and HliD) and the Ycf39-Hlip complex (Ycf39, HliC, HliD and pigments). Tagged protein does not pull down mature PSII.

It localises to the cellular thylakoid membrane. Functionally, requires HliD to bind pigments. The Ycf39-Hlip complex binds D1 at an early stage of PSII assembly along with Ycf48, ribosomes and ChlG, the last enzyme in chlorophyll biosynthesis; it may be involved in chlorophyll reuse and delivery to D1 in the initial stages of PSII assembly. The Ycf39-Hlip complex efficiently quenches chlorophyll fluorescence, contributing to photoprotection. The polypeptide is Photosystem II assembly factor Ycf39 (Synechocystis sp. (strain ATCC 27184 / PCC 6803 / Kazusa)).